Consider the following 306-residue polypeptide: RNA pseudouridylate synthase domain-containing protein 1 (306 aa).

At methionine 1 the chain carries N-acetylmethionine. Aspartate 67 is a catalytic residue. The tract at residues 255–290 (RTDPDPDPMSGGPRPCSPSTPQPRPGRPPPETEAQR) is disordered. Residues 269–285 (PCSPSTPQPRPGRPPPE) are compositionally biased toward pro residues.

It belongs to the pseudouridine synthase RluA family.

The chain is RNA pseudouridylate synthase domain-containing protein 1 (Rpusd1) from Mus musculus (Mouse).